The sequence spans 478 residues: Serine/threonine-protein phosphatase T (478 aa).

3 TPR repeats span residues A9–E42, P43–Y76, and K78–N110. The catalytic stretch occupies residues A151–D463. D221, H223, D250, and N282 together coordinate Mn(2+). The Proton donor/acceptor role is filled by H283. 2 residues coordinate Mn(2+): H331 and H408.

This sequence belongs to the PPP phosphatase family. PP-5 (PP-T) subfamily. It depends on Mg(2+) as a cofactor. Mn(2+) is required as a cofactor.

It localises to the nucleus. The enzyme catalyses O-phospho-L-seryl-[protein] + H2O = L-seryl-[protein] + phosphate. It carries out the reaction O-phospho-L-threonyl-[protein] + H2O = L-threonyl-[protein] + phosphate. Its function is as follows. Protein phosphatase that specifically binds to and dephosphorylates the molecular chaperone Hsp90. Dephosphorylation positively regulates the Hsp90 chaperone machinery. The protein is Serine/threonine-protein phosphatase T of Aspergillus oryzae (strain ATCC 42149 / RIB 40) (Yellow koji mold).